The primary structure comprises 290 residues: 4-diphosphocytidyl-2-C-methyl-D-erythritol kinase (290 aa).

Lys20 is an active-site residue. 104 to 114 (PMGGGLGGGSS) is an ATP binding site. Asp146 is a catalytic residue.

This sequence belongs to the GHMP kinase family. IspE subfamily.

The catalysed reaction is 4-CDP-2-C-methyl-D-erythritol + ATP = 4-CDP-2-C-methyl-D-erythritol 2-phosphate + ADP + H(+). It participates in isoprenoid biosynthesis; isopentenyl diphosphate biosynthesis via DXP pathway; isopentenyl diphosphate from 1-deoxy-D-xylulose 5-phosphate: step 3/6. In terms of biological role, catalyzes the phosphorylation of the position 2 hydroxy group of 4-diphosphocytidyl-2C-methyl-D-erythritol. This is 4-diphosphocytidyl-2-C-methyl-D-erythritol kinase from Shewanella frigidimarina (strain NCIMB 400).